Here is a 219-residue protein sequence, read N- to C-terminus: Exosomal polycystin-1-interacting protein (219 aa).

An N-terminal signal peptide occupies residues 1–19 (MAPPSRHCLLLISTLGVFA). Asn29, Asn42, Asn95, Asn188, and Asn210 each carry an N-linked (GlcNAc...) asparagine glycan.

It belongs to the EPCIP family. Homooligomer. Interacts with PKD1 (via the PKD repeats in the N-terminal extracellular region); the interaction is not dependent on N-glycosylation of either protein. In terms of processing, N-glycosylated. As to expression, detected in the kidney and in the endothelium of large blood vessels (at protein level).

It localises to the vesicle. Its subcellular location is the secreted. The protein localises to the extracellular exosome. Functionally, likely to be involved with PKD1 in the detection, sequestration and exocytosis of senescent mitochondria. This chain is Exosomal polycystin-1-interacting protein, found in Homo sapiens (Human).